A 298-amino-acid polypeptide reads, in one-letter code: Proline-rich protein 32 (298 aa).

Positions 36–56 are disordered; sequence CLSSKPEDDAEPWGQPQVPLR.

This is Proline-rich protein 32 (PRR32) from Homo sapiens (Human).